The chain runs to 660 residues: Protein FAM161A (660 aa).

Coiled-coil stretches lie at residues 93-120 (EEYF…YQDK) and 296-320 (YHDL…ALLA). The required for interaction with CFAP418 stretch occupies residues 341–525 (QLRDFLKYKK…PTVSSRGREQ (185 aa)). Residues K468 and K484 each participate in a glycyl lysine isopeptide (Lys-Gly) (interchain with G-Cter in SUMO2) cross-link. Residues 522–552 (GREQAVRKSEKERMREYQRELEEREEKLKKR) adopt a coiled-coil conformation. The segment at 605–660 (KSVTEDKESFNEEEKIEERENGEENYFIDTNSQDSYKEKDEANEESEEEKSVEESH) is disordered. The segment covering 606–623 (SVTEDKESFNEEEKIEER) has biased composition (basic and acidic residues). Residues 645–660 (EANEESEEEKSVEESH) show a composition bias toward acidic residues.

It belongs to the FAM161 family. In terms of assembly, interacts (via central region) with CFAP418 (via N-terminus); the interaction is direct. Interacts (via C-terminus) with microtubules. Interacts with LCA5. Interacts with CEP290. Interacts with SDCCAG8. Interacts with FAM161B. Interacts with POC1B. Interacts with CEP78. Forms a microtubule-associated complex with POC5, CETN2 and POC1B. Interacts with CCDC15. As to expression, isoform 1 and isoform 3 are widely expressed with highest levels in retina and testis, with isoform 1 being the most abundant in all tissues tested.

Its subcellular location is the cytoplasm. It is found in the cytoskeleton. It localises to the cilium basal body. The protein resides in the cell projection. The protein localises to the cilium. Its subcellular location is the microtubule organizing center. It is found in the centrosome. It localises to the centriole. Functionally, involved in ciliogenesis. The protein is Protein FAM161A (FAM161A) of Homo sapiens (Human).